The following is a 1828-amino-acid chain: MPIDSSSILGIISEEDVIRAAISTSATKFGSQLHSTVCDHVKETYLDAVERQKVKKKIDVRRDLSQEQLQLLNDLYPERHIVSSNCERGTHSFAAASRKIETDLLLSRIPKRSWVYDIGGNWATHVKRNDGRKVHCCCPTVDIRDSARKTVRWASIEKYLDEKEEIPPEIGERIKRLQADEDRIYANLKSEKAQPEDLDGKWYCGNRFEDCVFRADRAYAMAIHSIYDIDLSDLANALEEKRIKVMSGTFLFSVDLLLGKKSGTLPTMDGFFEVEDGYVKYGFHNDTNPGYKHNLNQLMKYLTKTFVVAKGGTIYYLELTEQRGDVMFFTMTDATEARMNGVVADESFKCIPIDNKDEVVFPIFEVDQKTDALVFSEILLSRDFVQRAIEYTGRLKPAQLTSDNVNTYLTSTNNTIIIGGSSKKNATKVDATLIQQITTTLIVWTELMNQRQKRVLEKLRMQMKDDVDFMTLAHATFLKMFGKVSYYQRALRCFANWISYVHGADAIQFRNVPLYAEVTDRIKLWKNYAPNQGFVLDLEELDVKIKLHEITEREKRDVSRCIVSGKLGELSSVDNTECGAVLDGKDYKDSRRKTTFEDLLDGEVATNFLDNWCDKTDHFNFSRSDAVSKYAWGMKLLKGVWEFLLPPLHFAPVYVDAEQARIRLNAEIVTVVEHAVTESNVGLTGVEKAEFADAMSFLVGAAKHLEKRKEVAQQAVVEAVEAVRELRKVHSPADVCNAVDLWSAFEKDLDDDDETGTTATIVEKGKAVCDDDVQVVLCGSSSTSSVEEVSKEAELFVETIESQASSVTETSDVTTEVAASSSDESVMSEVPEKSWASVAEDESDDSYYLRSMIISDKVQKSALPKRPDFSKYSTLQQKAKQEALWYLQCKIVSDRTTLRSIIDDHLRGMFHNGNCELPKDSAFLDYTVDNCGTWMYGKPSRPGHSYGVGFSLDTKQRITKCELVKLMWNRDCRGQMNQKPVNTRAFQYLLLSDLSFMMNELVIYRNLQQVVKKKERTKQARITLRDGVPGCGKSTWILNNANPMKDMVLCVGKEATEDLKEKFMKKHKCAESDLKRIRTVDSFLMHDYDKFRAATVHFDEALMAHAGIVYFCADILGAKKVICQGDSQQIPFINRVESITLQYAKLAIDETEYVRLTYRSPVDVAHYLTKKSWYSGGRVTTKNSVLRSMKVVGPRDAKPMTSVHCVPYHRDAQYLTFTQSEKADLYKALRAKGPVEVNTVHETQGKTFDDVIVVRLKTTENEIYPGGRKGQPYEIVATTRHRRSLVYYTAIEDRLFEDISDMQDVMESKLMKNLCSELTKXRFGSKYESILICDREVRVPDVGTPVIIQDFYDRVLPGNSTMDSHFDGYEVSTSDISIELENCTVQPNKNVKVWQDKRGLVPVLRTAMPPKRQNLPVEAMLALKKRNMAAPKLQEAVNEFEVIERTVNRAKEIFFDTSLIDDSEVSTRESNLRWWKRQSTTAKAQLKKETRLLHELDLCYYNYCIKGDEKPKMDRSPQHEYGALQTVVFPDKIVNALFGPAMKEINERIRLALKPHVVYNSRMNAEELNRTVEFLDPEEDFNAFEIDFSKFDKSKTSLHIRAVIELYKLFGLNDLFALLWEKSQCQTKIRDFVNGITAYLLYQQKSGNCDTYGSNTWSAALALLESMPLEKAKFMIFGGDDSLILFPKHLTIEDPCRRLASLWNFDCKLFDFKHNMFCGKFLLKVGDRFKFAPDPMKLITKLGRKDIVDGRLLSEIFVSVGDNYRSYRDYRILEQLTYALRERYRTTEDPTAALVALKKYIFDFKLWASMFNYKGEFVECRVDRNFEW.

The interval 61–812 (RRDLSQEQLQ…QASSVTETSD (752 aa)) is methyltransferase. Positions 82-302 (VSSNCERGTH…HNLNQLMKYL (221 aa)) constitute an Alphavirus-like MT domain. The stretch at 701–728 (AAKHLEKRKEVAQQAVVEAVEAVRELRK) forms a coiled coil. The region spanning 996 to 1154 (FMMNELVIYR…KLAIDETEYV (159 aa)) is the (+)RNA virus helicase ATP-binding domain. Positions 1026–1289 (DGVPGCGKST…RHRRSLVYYT (264 aa)) are helicase. A (+)RNA virus helicase C-terminal domain is found at 1155-1320 (RLTYRSPVDV…MKNLCSELTK (166 aa)). A coiled-coil region spans residues 1432–1496 (KLQEAVNEFE…KKETRLLHEL (65 aa)). Positions 1581-1694 (FNAFEIDFSK…LFPKHLTIED (114 aa)) constitute a RdRp catalytic domain.

Belongs to the ssRNA positive-strand viruses RNA-directed RNA polymerase family. As to quaternary structure, heterodimer of a large and a small subunit.

The catalysed reaction is RNA(n) + a ribonucleoside 5'-triphosphate = RNA(n+1) + diphosphate. It carries out the reaction ATP + H2O = ADP + phosphate + H(+). Functionally, is an RNA-dependent RNA polymerase active in viral RNA replication. Its function is as follows. Is a methyltransferase active in RNA capping and an RNA helicase. Methyltransferase displays a cytoplasmic capping enzyme activity. This function is necessary since all viral RNAs are synthesized in the cytoplasm, and host capping enzymes are restricted to the nucleus. Helicase region probably exhibits NTPase and RNA unwinding activities (Potential). This is Replicase large subunit (rep) from Hordeum vulgare (Barley).